The chain runs to 272 residues: Phosphatidylglycerol--prolipoprotein diacylglyceryl transferase (272 aa).

A run of 4 helical transmembrane segments spans residues 24–44, 59–79, 102–122, and 129–149; these read WYGI…KWIA, YFIW…ILFY, FIGI…IASF, and GVKF…GYVF. An a 1,2-diacyl-sn-glycero-3-phospho-(1'-sn-glycerol)-binding site is contributed by arginine 151. Transmembrane regions (helical) follow at residues 180 to 200, 208 to 228, and 244 to 264; these read PSQL…LYAW, GQLG…AEFW, and MGQL…GYLA.

This sequence belongs to the Lgt family.

Its subcellular location is the cell inner membrane. The enzyme catalyses L-cysteinyl-[prolipoprotein] + a 1,2-diacyl-sn-glycero-3-phospho-(1'-sn-glycerol) = an S-1,2-diacyl-sn-glyceryl-L-cysteinyl-[prolipoprotein] + sn-glycerol 1-phosphate + H(+). The protein operates within protein modification; lipoprotein biosynthesis (diacylglyceryl transfer). Catalyzes the transfer of the diacylglyceryl group from phosphatidylglycerol to the sulfhydryl group of the N-terminal cysteine of a prolipoprotein, the first step in the formation of mature lipoproteins. The chain is Phosphatidylglycerol--prolipoprotein diacylglyceryl transferase from Wolinella succinogenes (strain ATCC 29543 / DSM 1740 / CCUG 13145 / JCM 31913 / LMG 7466 / NCTC 11488 / FDC 602W) (Vibrio succinogenes).